A 1085-amino-acid chain; its full sequence is Solute carrier family 12 member 4 (1085 aa).

At 1-119 (MPHFTVVPVD…RRAAKAPSMG (119 aa)) the chain is on the cytoplasmic side. A phosphoserine mark is found at S24, S47, S51, S81, and S88. The tract at residues 32 to 56 (AEREDSDGQGNHRENSPFLSPLDAS) is disordered. A discontinuously helical transmembrane segment spans residues 120–141 (TLMGVYLPCLQNIFGVILFLRL). Positions 131 and 132 each coordinate K(+). The Extracellular segment spans residues 142–149 (TWMVGTAG). Residues 150-172 (VLQALLIVLICCCCTLLTAISMS) traverse the membrane as a helical segment. Over 173-196 (AIATNGVVPAGGSYFMISRSLGPE) the chain is Cytoplasmic. Residues 197-225 (FGGAVGLCFYLGTTFAAAMYILGAIEILL) form a helical membrane-spanning segment. Y216 contributes to the K(+) binding site. Residues 226-248 (TYIAPPAAIFYPSGTHDMSSATL) lie on the Extracellular side of the membrane. 2 helical membrane passes run 249–271 (NNMR…VGVK) and 272–297 (YVNK…GGIK). At 298 to 419 (SAFDPPVFPV…LYVVADIATS (122 aa)) the chain is on the extracellular side. A disulfide bond links C308 and C323. Residues N312, N331, and N347 are each glycosylated (N-linked (GlcNAc...) asparagine). C343 and C353 are joined by a disulfide. A helical membrane pass occupies residues 420-440 (FTVLVGIFFPSVTGIMAGSNR). K(+) is bound by residues P429 and T432. Residues G433, I434, and M435 each coordinate chloride. At 441-450 (SGDLRDAQKS) the chain is on the cytoplasmic side. Residues 451-473 (IPVGTILAIVTTSLVYFSSVILF) form a helical membrane-spanning segment. Topologically, residues 474–504 (GACIEGVVLRDKYGDGVSRNLVVGTLAWPSP) are extracellular. The chain crosses the membrane as a helical span at residues 505 to 531 (WVIVVGSFFSTCGAGLQSLTGAPRLLQ). The Cytoplasmic segment spans residues 532-554 (AIAKDNIIPFLRVFGHGKANGEP). The next 2 helical transmembrane spans lie at 555-575 (TWAL…ASLD) and 576-598 (MVAP…ACAV). Y589 lines the chloride pocket. At 599 to 612 (QTLLRTPNWRPRFK) the chain is on the cytoplasmic side. 2 helical membrane passes run 613 to 635 (YYHW…VSSW) and 636 to 651 (YYAL…IYKY). At 652–1085 (IEYQGAEKEW…GGREVITIYS (434 aa)) the chain is on the cytoplasmic side. The tract at residues 665 to 681 (IRGLSLSAARYALLRLE) is scissor helix. 5 residues coordinate ATP: L697, K699, K707, Y708, and V730. S734 carries the post-translational modification Phosphoserine. ATP contacts are provided by G794, W795, and Y797. 2 positions are modified to phosphoserine: S916 and S967. Position 983 is a phosphothreonine (T983). Residue S1050 is modified to Phosphoserine.

It belongs to the SLC12A transporter family. K/Cl co-transporter subfamily. As to quaternary structure, homodimer; adopts a domain-swap conformation at the scissor helices connecting the transmembrane domain and C-terminal domain. Heterodimer with other K-Cl cotransporters. N-glycosylated. Post-translationally, phosphorylated, phosphorylation may regulate transporter activity. Ubiquitous.

It is found in the cell membrane. It catalyses the reaction K(+)(in) + chloride(in) = K(+)(out) + chloride(out). Inhibited by WNK3. Mediates electroneutral potassium-chloride cotransport when activated by cell swelling. May contribute to cell volume homeostasis in single cells. May be involved in the regulation of basolateral Cl(-) exit in NaCl absorbing epithelia. The chain is Solute carrier family 12 member 4 (Slc12a4) from Rattus norvegicus (Rat).